Reading from the N-terminus, the 458-residue chain is Exodeoxyribonuclease 7 large subunit (458 aa).

This sequence belongs to the XseA family. As to quaternary structure, heterooligomer composed of large and small subunits.

The protein resides in the cytoplasm. It carries out the reaction Exonucleolytic cleavage in either 5'- to 3'- or 3'- to 5'-direction to yield nucleoside 5'-phosphates.. In terms of biological role, bidirectionally degrades single-stranded DNA into large acid-insoluble oligonucleotides, which are then degraded further into small acid-soluble oligonucleotides. The protein is Exodeoxyribonuclease 7 large subunit of Sodalis glossinidius (strain morsitans).